Here is a 245-residue protein sequence, read N- to C-terminus: MALALCLQVLCSLCGWLSLYISFCHLNKHRSYEWSCRLVTFTHGVLSIGLSAYIGFIDGPWPFTHPGSPNTPLQVHVLCLTLGYFIFDLGWCVYFQSEGALMLAHHTLSILGIIMALVLGESGTEVNAVLFGSELTNPLLQMRWFLRETGHYHSFTGDVVDFLFVALFTGVRIGVGACLLFCEMVSPTPKWFVKAGGVAMYAVSWCFMFSIWRFAWRKSIKKYHAWRSRRSEERQLKHNGHLKIH.

The next 6 membrane-spanning stretches (helical) occupy residues 1–21 (MALALCLQVLCSLCGWLSLYI), 38–58 (LVTFTHGVLSIGLSAYIGFID), 75–95 (VHVLCLTLGYFIFDLGWCVYF), 99–119 (GALMLAHHTLSILGIIMALVL), 162–182 (FLFVALFTGVRIGVGACLLFC), and 191–211 (WFVKAGGVAMYAVSWCFMFSI). Residues 29-204 (HRSYEWSCRL…AGGVAMYAVS (176 aa)) enclose the TLC domain.

It belongs to the TLCD5 family.

Its subcellular location is the membrane. In Homo sapiens (Human), this protein is TLC domain-containing protein 5.